The chain runs to 128 residues: Large ribosomal subunit protein bL17 (128 aa).

Belongs to the bacterial ribosomal protein bL17 family. As to quaternary structure, part of the 50S ribosomal subunit. Contacts protein L32.

The protein is Large ribosomal subunit protein bL17 of Pseudomonas fluorescens (strain Pf0-1).